The following is a 204-amino-acid chain: Probable nicotinate-nucleotide adenylyltransferase (204 aa).

It belongs to the NadD family.

The enzyme catalyses nicotinate beta-D-ribonucleotide + ATP + H(+) = deamido-NAD(+) + diphosphate. It functions in the pathway cofactor biosynthesis; NAD(+) biosynthesis; deamido-NAD(+) from nicotinate D-ribonucleotide: step 1/1. Its function is as follows. Catalyzes the reversible adenylation of nicotinate mononucleotide (NaMN) to nicotinic acid adenine dinucleotide (NaAD). The sequence is that of Probable nicotinate-nucleotide adenylyltransferase from Mycolicibacterium gilvum (strain PYR-GCK) (Mycobacterium gilvum (strain PYR-GCK)).